Consider the following 223-residue polypeptide: uncharacterized protein (223 aa).

Residues 117–148 (THAHTHAHTHGHTHTRAHSTHAHTHAHSHYHT) are disordered.

This is an uncharacterized protein from Homo sapiens (Human).